Consider the following 107-residue polypeptide: MMKVLVVVALLVTLISYSSSEGIDDLEADELLSLMANEQTRKECIPKHHECTSNKHGCCRGNFFKYKCQCTTVVTQDGEQTERCFCGTPPRHKAAELVVGFGKKIFG.

A signal peptide spans Met1–Ser20. A propeptide spanning residues Glu21 to Arg41 is cleaved from the precursor. 4 cysteine pairs are disulfide-bonded: Cys44/Cys59, Cys51/Cys68, Cys58/Cys86, and Cys70/Cys84.

The protein belongs to the neurotoxin 19 (CSTX) family. 04 (U1-Lctx) subfamily. In terms of tissue distribution, expressed by the venom gland.

The protein resides in the secreted. This is U1-lycotoxin-Ls1k from Lycosa singoriensis (Wolf spider).